The primary structure comprises 265 residues: Small ribosomal subunit protein uS2 (265 aa).

The segment at 231 to 265 (VEEEYEDYEGSEEDYDYDETEYADSVIPEDGEEAE) is disordered.

Belongs to the universal ribosomal protein uS2 family.

In Nostoc sp. (strain PCC 7120 / SAG 25.82 / UTEX 2576), this protein is Small ribosomal subunit protein uS2.